The chain runs to 177 residues: Insertion element IS1223 uncharacterized 20.7 kDa protein (177 aa).

The segment at Lys-112–Leu-131 is disordered. A compositionally biased stretch (basic residues) spans Gln-113–Thr-128.

The protein belongs to the IS150/IS1296 orfA family.

In Lactobacillus johnsonii, this protein is Insertion element IS1223 uncharacterized 20.7 kDa protein.